The following is a 547-amino-acid chain: MAAKDVVFGDSARTKMVEGVNILANAVKTTLGPKGRNVVIERSFGGPIITKDGVSVAKEIELKDKLQNMGAQMVKEVASKTADIAGDGTTTATVLAQSIVREGMKYVVSGYNPLDLKRGIDKAVTAAIEELAKISKPCTTTKEIAQVGSISANSDQSIGQRIAEAMEKVGKEGVITVEDGKSLEDELEVVEGMQFDRGYLSPYFINQPEKQVAVLESPYVLLFDKKIANIRDLLPVLEQVAKSGRPLLIIAEDVEGEALATLVVNNIRGIIKTCAVKAPGFGDRRKAMLEDIAILTGGIVIAEEIGLTLEKTTLEHLGQAKRLEVGKENTIIIDGAGDAKAIEARVKNIRVQVEEATSDYDKEKLQERVAKLAGGVAVIRVGAATEVEMKEKKARVDDALHATRAAVEEGIIPGGGVALIRAMQGIKGLKGDNADQDAGISIVLRAMQEPLRTIVSNAGEDAGVVVNAVQASKGNNGYNAATGEYGDLVAQGVIDPTKVTKAALVNAASVAGLLLTTDCAISEAPKDESAGGGMPDMGGMGGMGGMM.

Residues 30–33 (TLGP), lysine 51, 87–91 (DGTTT), glycine 415, 479–481 (NAA), and aspartate 495 contribute to the ATP site.

The protein belongs to the chaperonin (HSP60) family. In terms of assembly, forms a cylinder of 14 subunits composed of two heptameric rings stacked back-to-back. Interacts with the co-chaperonin GroES.

The protein localises to the cytoplasm. It catalyses the reaction ATP + H2O + a folded polypeptide = ADP + phosphate + an unfolded polypeptide.. In terms of biological role, together with its co-chaperonin GroES, plays an essential role in assisting protein folding. The GroEL-GroES system forms a nano-cage that allows encapsulation of the non-native substrate proteins and provides a physical environment optimized to promote and accelerate protein folding. The polypeptide is Chaperonin GroEL (Polynucleobacter necessarius subsp. necessarius (strain STIR1)).